Here is a 325-residue protein sequence, read N- to C-terminus: Elongation factor P--(R)-beta-lysine ligase (325 aa).

Substrate is bound at residue 76 to 78; sequence SPE. Residues 100 to 102 and Asn109 each bind ATP; that span reads RNE. Tyr118 contributes to the substrate binding site. Position 244 to 245 (244 to 245) interacts with ATP; it reads EL. Glu251 is a binding site for substrate. Gly300 serves as a coordination point for ATP.

Belongs to the class-II aminoacyl-tRNA synthetase family. EpmA subfamily. In terms of assembly, homodimer.

The catalysed reaction is D-beta-lysine + L-lysyl-[protein] + ATP = N(6)-((3R)-3,6-diaminohexanoyl)-L-lysyl-[protein] + AMP + diphosphate + H(+). Its function is as follows. With EpmB is involved in the beta-lysylation step of the post-translational modification of translation elongation factor P (EF-P). Catalyzes the ATP-dependent activation of (R)-beta-lysine produced by EpmB, forming a lysyl-adenylate, from which the beta-lysyl moiety is then transferred to the epsilon-amino group of a conserved specific lysine residue in EF-P. This chain is Elongation factor P--(R)-beta-lysine ligase, found in Yersinia pseudotuberculosis serotype O:1b (strain IP 31758).